Consider the following 429-residue polypeptide: Enolase (429 aa).

Glutamine 162 contributes to the (2R)-2-phosphoglycerate binding site. The active-site Proton donor is the glutamate 204. Residues aspartate 241, glutamate 288, and aspartate 315 each coordinate Mg(2+). Residues lysine 340, arginine 369, serine 370, and lysine 391 each coordinate (2R)-2-phosphoglycerate. Lysine 340 serves as the catalytic Proton acceptor.

This sequence belongs to the enolase family. Mg(2+) is required as a cofactor.

The protein resides in the cytoplasm. It is found in the secreted. It localises to the cell surface. It carries out the reaction (2R)-2-phosphoglycerate = phosphoenolpyruvate + H2O. Its pathway is carbohydrate degradation; glycolysis; pyruvate from D-glyceraldehyde 3-phosphate: step 4/5. Catalyzes the reversible conversion of 2-phosphoglycerate (2-PG) into phosphoenolpyruvate (PEP). It is essential for the degradation of carbohydrates via glycolysis. This is Enolase from Christiangramia forsetii (strain DSM 17595 / CGMCC 1.15422 / KT0803) (Gramella forsetii).